The following is a 603-amino-acid chain: MNPISTLTLASLIILTLPITTTLLQNNKTNCFLYITKTAVTYAFVISLIPTLLFVQSNQEAYISNWHWMTIHTLKLSLSFKLDFFSLTFMPIALFITWSIMEFSLWYMHSDPHINRFFKYLLLFLITMLILVSANNLLQLFMGWEGVGIMSFLLISWWHGRTDANTAALQAMLYNRIGDMGFIMMMAWFIIHLNSWEFQQIFLTNPKNTTLPLLGLLLASTGKSAQFGLHPWLPSAMEGPTPVSALLHSSTMVMAGVFTLIRFYPLMENNLTVQTSTLCLGAITTLFTAICALTQNDIKKIIALSTSSQLGLMMVTIGINQPHLAFTHMCTHAFFKAMLFLSSGSIIHNLDNEQDIRKMGGLYKTMPITSTAIIIGSLALTGMPFLTGFYSKDPIIETANMSYINTWALLVTLIAVSMTASYSTRIIFFALLGQPRYPTLTRINENNPHLVNPIKRLILGSIFMGFFISMNTIPHTTPQMTMPPHLKFMALAVTLLGFTVATELNNMTHNLMFKQPSRMYTFSTTLGYYPTTTHRILPYLSLTMSQNLATTIMDSIWLEKMIPKNLTTMQKTAASLVSNQKGLMKLYFLSFLLSITLGLLIAL.

The next 15 helical transmembrane spans lie at 4–24 (ISTL…TTLL), 35–55 (ITKT…LLFV), 84–104 (FFSL…MEFS), 121–141 (LLLF…LQLF), 177–197 (IGDM…NSWE), 213–233 (LLGL…HPWL), 241–261 (TPVS…FTLI), 273–293 (VQTS…ICAL), 301–320 (IIAL…IGIN), 325–347 (AFTH…GSII), 366–386 (MPIT…MPFL), 413–433 (LIAV…ALLG), 457–477 (LILG…PHTT), 480–500 (MTMP…GFTV), and 583–603 (LMKL…LIAL).

Belongs to the complex I subunit 5 family. In terms of assembly, core subunit of respiratory chain NADH dehydrogenase (Complex I) which is composed of 45 different subunits.

The protein localises to the mitochondrion inner membrane. It catalyses the reaction a ubiquinone + NADH + 5 H(+)(in) = a ubiquinol + NAD(+) + 4 H(+)(out). In terms of biological role, core subunit of the mitochondrial membrane respiratory chain NADH dehydrogenase (Complex I) which catalyzes electron transfer from NADH through the respiratory chain, using ubiquinone as an electron acceptor. Essential for the catalytic activity and assembly of complex I. This Mammuthus primigenius (Siberian woolly mammoth) protein is NADH-ubiquinone oxidoreductase chain 5 (MT-ND5).